Here is a 115-residue protein sequence, read N- to C-terminus: Phosphoribosyl-AMP cyclohydrolase (115 aa).

Asp-80 lines the Mg(2+) pocket. Cys-81 serves as a coordination point for Zn(2+). Mg(2+) is bound by residues Asp-82 and Asp-84. Cys-97 and Cys-104 together coordinate Zn(2+).

It belongs to the PRA-CH family. In terms of assembly, homodimer. It depends on Mg(2+) as a cofactor. The cofactor is Zn(2+).

The protein localises to the cytoplasm. It carries out the reaction 1-(5-phospho-beta-D-ribosyl)-5'-AMP + H2O = 1-(5-phospho-beta-D-ribosyl)-5-[(5-phospho-beta-D-ribosylamino)methylideneamino]imidazole-4-carboxamide. Its pathway is amino-acid biosynthesis; L-histidine biosynthesis; L-histidine from 5-phospho-alpha-D-ribose 1-diphosphate: step 3/9. Its function is as follows. Catalyzes the hydrolysis of the adenine ring of phosphoribosyl-AMP. This Mycobacterium bovis (strain ATCC BAA-935 / AF2122/97) protein is Phosphoribosyl-AMP cyclohydrolase.